Here is a 55-residue protein sequence, read N- to C-terminus: ATP synthase F(0) complex subunit 8 (55 aa).

A helical transmembrane segment spans residues 7-24 (NPWFFIMLLSWLTFSLII). Residues 35-55 (NPPSNKTTTHTKTTPWTWPWT) form a disordered region. Low complexity predominate over residues 37–55 (PSNKTTTHTKTTPWTWPWT).

This sequence belongs to the ATPase protein 8 family. As to quaternary structure, component of the ATP synthase complex composed at least of ATP5F1A/subunit alpha, ATP5F1B/subunit beta, ATP5MC1/subunit c (homooctomer), MT-ATP6/subunit a, MT-ATP8/subunit 8, ATP5ME/subunit e, ATP5MF/subunit f, ATP5MG/subunit g, ATP5MK/subunit k, ATP5MJ/subunit j, ATP5F1C/subunit gamma, ATP5F1D/subunit delta, ATP5F1E/subunit epsilon, ATP5PF/subunit F6, ATP5PB/subunit b, ATP5PD/subunit d, ATP5PO/subunit OSCP. ATP synthase complex consists of a soluble F(1) head domain (subunits alpha(3) and beta(3)) - the catalytic core - and a membrane F(0) domain - the membrane proton channel (subunits c, a, 8, e, f, g, k and j). These two domains are linked by a central stalk (subunits gamma, delta, and epsilon) rotating inside the F1 region and a stationary peripheral stalk (subunits F6, b, d, and OSCP).

The protein localises to the mitochondrion membrane. Subunit 8, of the mitochondrial membrane ATP synthase complex (F(1)F(0) ATP synthase or Complex V) that produces ATP from ADP in the presence of a proton gradient across the membrane which is generated by electron transport complexes of the respiratory chain. ATP synthase complex consist of a soluble F(1) head domain - the catalytic core - and a membrane F(1) domain - the membrane proton channel. These two domains are linked by a central stalk rotating inside the F(1) region and a stationary peripheral stalk. During catalysis, ATP synthesis in the catalytic domain of F(1) is coupled via a rotary mechanism of the central stalk subunits to proton translocation. In vivo, can only synthesize ATP although its ATP hydrolase activity can be activated artificially in vitro. Part of the complex F(0) domain. This is ATP synthase F(0) complex subunit 8 from Chaetura pelagica (Chimney swift).